The chain runs to 163 residues: Protein-export protein SecB (163 aa).

It belongs to the SecB family. In terms of assembly, homotetramer, a dimer of dimers. One homotetramer interacts with 1 SecA dimer.

The protein localises to the cytoplasm. In terms of biological role, one of the proteins required for the normal export of preproteins out of the cell cytoplasm. It is a molecular chaperone that binds to a subset of precursor proteins, maintaining them in a translocation-competent state. It also specifically binds to its receptor SecA. This Caulobacter vibrioides (strain ATCC 19089 / CIP 103742 / CB 15) (Caulobacter crescentus) protein is Protein-export protein SecB.